The primary structure comprises 156 residues: Snaclec alboaggregin-B subunit alpha (156 aa).

An N-terminal signal peptide occupies residues 1 to 23 (MGRFIFVSFGLLVVFLSLSGTGA). A C-type lectin domain is found at 24–151 (DCPSDWSSFK…CEQKHIFMCK (128 aa)). Cystine bridges form between Cys25-Cys36, Cys53-Cys150, and Cys125-Cys142.

The protein belongs to the snaclec family. Heterodimer of subunits alpha and beta; disulfide-linked. Expressed by the venom gland.

The protein localises to the secreted. In terms of biological role, weakly agglutinates platelets at high doses by binding to GPIbalpha (GP1BA). In Trimeresurus albolabris (White-lipped pit viper), this protein is Snaclec alboaggregin-B subunit alpha.